A 71-amino-acid polypeptide reads, in one-letter code: Translation initiation factor IF-1 (71 aa).

In terms of domain architecture, S1-like spans 1–71 (MSKDDLIQFT…LTKGRVIHRH (71 aa)).

This sequence belongs to the IF-1 family. As to quaternary structure, component of the 30S ribosomal translation pre-initiation complex which assembles on the 30S ribosome in the order IF-2 and IF-3, IF-1 and N-formylmethionyl-tRNA(fMet); mRNA recruitment can occur at any time during PIC assembly.

It is found in the cytoplasm. Functionally, one of the essential components for the initiation of protein synthesis. Stabilizes the binding of IF-2 and IF-3 on the 30S subunit to which N-formylmethionyl-tRNA(fMet) subsequently binds. Helps modulate mRNA selection, yielding the 30S pre-initiation complex (PIC). Upon addition of the 50S ribosomal subunit IF-1, IF-2 and IF-3 are released leaving the mature 70S translation initiation complex. The sequence is that of Translation initiation factor IF-1 from Rickettsia canadensis (strain McKiel).